The primary structure comprises 582 residues: Cryptochrome DASH, chloroplastic/mitochondrial (582 aa).

Residues 1–49 (MLHFLSSSSPLNPQFLLLPRQSARLRVLLSIPVSAMSSSSSSSSRGALA) constitute a chloroplast and mitochondrion transit peptide. In terms of domain architecture, Photolyase/cryptochrome alpha/beta spans 84–234 (GVAIVWFRND…KLQLIWGATL (151 aa)). The tract at residues 560–582 (GHQKRDQQFNRQRRPGHMYRRQK) is disordered. Basic residues predominate over residues 570–582 (RQRRPGHMYRRQK).

The protein belongs to the DNA photolyase class-1 family. FAD serves as cofactor. The cofactor is (6R)-5,10-methylene-5,6,7,8-tetrahydrofolate.

It is found in the plastid. It localises to the chloroplast. The protein localises to the mitochondrion. May have a photoreceptor function. Binds ss- and ds-DNA in a sequence non-specific manner, lacks photolyase activity. In Oryza sativa subsp. japonica (Rice), this protein is Cryptochrome DASH, chloroplastic/mitochondrial (CRYD).